Consider the following 84-residue polypeptide: uncharacterized protein (84 aa).

This is an uncharacterized protein from Saccharomyces cerevisiae (strain ATCC 204508 / S288c) (Baker's yeast).